The primary structure comprises 160 residues: Crossover junction endodeoxyribonuclease RuvC (160 aa).

Catalysis depends on residues D7, E67, and D138. Mg(2+) contacts are provided by D7, E67, and D138.

The protein belongs to the RuvC family. As to quaternary structure, homodimer which binds Holliday junction (HJ) DNA. The HJ becomes 2-fold symmetrical on binding to RuvC with unstacked arms; it has a different conformation from HJ DNA in complex with RuvA. In the full resolvosome a probable DNA-RuvA(4)-RuvB(12)-RuvC(2) complex forms which resolves the HJ. It depends on Mg(2+) as a cofactor.

It localises to the cytoplasm. It catalyses the reaction Endonucleolytic cleavage at a junction such as a reciprocal single-stranded crossover between two homologous DNA duplexes (Holliday junction).. The RuvA-RuvB-RuvC complex processes Holliday junction (HJ) DNA during genetic recombination and DNA repair. Endonuclease that resolves HJ intermediates. Cleaves cruciform DNA by making single-stranded nicks across the HJ at symmetrical positions within the homologous arms, yielding a 5'-phosphate and a 3'-hydroxyl group; requires a central core of homology in the junction. The consensus cleavage sequence is 5'-(A/T)TT(C/G)-3'. Cleavage occurs on the 3'-side of the TT dinucleotide at the point of strand exchange. HJ branch migration catalyzed by RuvA-RuvB allows RuvC to scan DNA until it finds its consensus sequence, where it cleaves and resolves the cruciform DNA. This chain is Crossover junction endodeoxyribonuclease RuvC, found in Brachyspira hyodysenteriae (strain ATCC 49526 / WA1).